Consider the following 208-residue polypeptide: Proheparin-binding EGF-like growth factor (208 aa).

Residues 1–23 (MKLLPSVMLKLFLAAVLSALVTG) form the signal peptide. Positions 24 to 62 (ESLERLRRGLAAATSNPDPPTGSTNQLLPTGGDRAQGVQ) are excised as a propeptide. The Extracellular segment spans residues 24-160 (ESLERLRRGL…ENPLYTYDHT (137 aa)). 2 disordered regions span residues 35–57 (AATS…GGDR) and 80–104 (PQGL…LGKK). Over residues 36-51 (ATSNPDPPTGSTNQLL) the composition is skewed to polar residues. Thr85 is a glycosylation site (O-linked (GalNAc...) threonine). Residues 91-102 (NGKKKKKGKGLG) are compositionally biased toward basic residues. The region spanning 104-144 (KRDPCLRKYKDYCIHGECRYLQEFRTPSCKCLPGYHGHRCH) is the EGF-like domain. 3 disulfide bridges follow: Cys108–Cys121, Cys116–Cys132, and Cys134–Cys143. A propeptide spans 149-208 (PVENPLYTYDHTTVLAVVAVVLSSVCLLVIVGLLMFRYHRRGGYDLESEEKVKLGVASSH) (C-terminal). Residues 161–184 (TVLAVVAVVLSSVCLLVIVGLLMF) traverse the membrane as a helical segment. The Cytoplasmic portion of the chain corresponds to 185–208 (RYHRRGGYDLESEEKVKLGVASSH).

Interacts with FBLN1. Interacts with EGFR and ERBB4. O-glycosylated. As to expression, most abundant in kidney, skeletal muscle, lung, spleen, brain and heart.

The protein resides in the secreted. It is found in the extracellular space. Its subcellular location is the cell membrane. Functionally, growth factor that mediates its effects via EGFR, ERBB2 and ERBB4. Required for normal cardiac valve formation and normal heart function. Promotes smooth muscle cell proliferation. May be involved in macrophage-mediated cellular proliferation. It is mitogenic for fibroblasts, but not endothelial cells. It is able to bind EGF receptor/EGFR with higher affinity than EGF itself and is a far more potent mitogen for smooth muscle cells than EGF. Also acts as a diphtheria toxin receptor. In Mus musculus (Mouse), this protein is Proheparin-binding EGF-like growth factor (Hbegf).